A 1185-amino-acid polypeptide reads, in one-letter code: MADGGEREELLSPSPVSPAKRQCSWPSPQAHHPRGSPGAAGGGAGGVGSSCLVLGARPHLQPDSLLDCAAKTVAEKWAYERVEERFERIPEPVQRRIVYWSFPRNEREICMYSSFQYRGGPGAGAAGGAAGASPAEEGPQPPPGAAAPAGSAPGGVAAGASPGLGAGAGAAGCGGEGLPFRRGIRLLDSGSVENVLQVGFHLSGTVTELATASEPAVTYKVAISFDRCKITSVTCGCGNKDIFYCAHVVALSLYRIRKPDQVKLRLPISETLFQMNRDQLQKFIQYLITAHHTEVLPTAQKLADEILSSNSEINQVNGAPDPTAGASIDDENCWHLDEEQVKEQVKLFLSQGGYCGSGKQLNSMFAKVREMLRMRDSNGARMLTLITEQFVADPRLTLWRQQGTNMTDKCRQLWDELGALWVCIILNPHCKLEEKSCWLQQLQKWSDLDVCPLEDGNYGHELPNITNALPQSAIHSPDSLSRPRRTVFTRAIEGRELHWQDSHLQRIISSDVYTAPACQRESERLLFNSQGQPLWLEHVPTACARVDALRSHGYPKEALRLTVAIINTLRLQQQRQLEIYKHQKKELLQRGTTTITNLEGWVGHPLDPIDCLFLTLTEACRLNDDGYLEMSDMNESRPPVYQHVPVAAGSPNSSESYLSLALEVALMGLGQQRLMPEGLYAQDKVCRNEEQLLSQLQELQLDDELVQTLQKQCILLLEGGPFSGLGEVIHRESVPMHTFAKYLFSALLPHDPDLSYKLALRAMRLPVLENSASAGDTSHPHHMVSVVPSRYPRWFTLGHLESQQCELASTMLTAAKGDTLRLRTILEAIQKHIHSSSLIFKLAQDAFKIATPTDSSTDSTLLNVALELGLQVMRMTLSTLNWRRREMVRWLVTCATEVGVRALVSILQSWYTLFTPTEATSIVAATAVSHTTILRLSLDYPQREELASCARTLALQCAMKDPQSCALSALTLCEKDHIAFEAAYQIAIDAAAGGMTHSQLFTIARYMELRGYPLRAFKLASLAMSHLNLAYNQDTHPAINDVLWACALSHSLGKNELAALIPLVVKSVHCATVLSDILRRCTVTAPGLAGIPGRRSSGKLMSTDKAPLRQLLDATINAYINTTHSRLTHISPRHYGEFIEFLSKARETFLLPQDGHLQFAQFIDNLKQIYKGKKKLMLLVRERFG.

The segment covering 1–10 (MADGGEREEL) has biased composition (basic and acidic residues). 2 disordered regions span residues 1 to 45 (MADG…GGAG) and 123 to 153 (AGAA…GSAP). Residues 219-256 (YKVAISFDRCKITSVTCGCGNKDIFYCAHVVALSLYRI) form an SWIM-type zinc finger.

This chain is Zinc finger SWIM domain-containing protein 5 (ZSWIM5), found in Homo sapiens (Human).